We begin with the raw amino-acid sequence, 80 residues long: uncharacterized protein (80 aa).

This is an uncharacterized protein from Bacillus subtilis (strain 168).